The primary structure comprises 321 residues: Probable 2-oxoglutarate-dependent dioxygenase AOP1.2 (321 aa).

One can recognise a Fe2OG dioxygenase domain in the interval 165-270 (TYYLTRLMKY…RYSTGLFSIP (106 aa)). Positions 194, 196, and 251 each coordinate Fe cation. Residue Arg261 participates in 2-oxoglutarate binding.

Belongs to the iron/ascorbate-dependent oxidoreductase family. Fe(2+) serves as cofactor.

Functionally, probable 2-oxoglutarate-dependent dioxygenase that may be involved in glucosinolates biosynthesis. May play a role in the production of aliphatic glucosinolates. This chain is Probable 2-oxoglutarate-dependent dioxygenase AOP1.2 (AOP1.2), found in Arabidopsis thaliana (Mouse-ear cress).